The primary structure comprises 296 residues: CRISPR-associated endonuclease Cas1 2 (296 aa).

Residues Glu-157, His-224, and Asp-237 each contribute to the Mn(2+) site.

The protein belongs to the CRISPR-associated endonuclease Cas1 family. In terms of assembly, homodimer, forms a heterotetramer with a Cas2 homodimer. Requires Mg(2+) as cofactor. Mn(2+) is required as a cofactor.

CRISPR (clustered regularly interspaced short palindromic repeat), is an adaptive immune system that provides protection against mobile genetic elements (viruses, transposable elements and conjugative plasmids). CRISPR clusters contain spacers, sequences complementary to antecedent mobile elements, and target invading nucleic acids. CRISPR clusters are transcribed and processed into CRISPR RNA (crRNA). Acts as a dsDNA endonuclease. Involved in the integration of spacer DNA into the CRISPR cassette. The polypeptide is CRISPR-associated endonuclease Cas1 2 (Chlorobaculum tepidum (strain ATCC 49652 / DSM 12025 / NBRC 103806 / TLS) (Chlorobium tepidum)).